The primary structure comprises 244 residues: Anti-H(O) lectin 1 (244 aa).

Asparagine 113 and asparagine 117 each carry an N-linked (GlcNAc...) asparagine glycan. Mn(2+) is bound by residues glutamate 127 and aspartate 129. Positions 129, 131, 137, and 142 each coordinate Ca(2+). Residues aspartate 142 and histidine 145 each contribute to the Mn(2+) site.

The protein belongs to the leguminous lectin family. As to quaternary structure, homotetramer.

Di-N-acetylchitobiose-binding anti-H(O) lectin. The sequence is that of Anti-H(O) lectin 1 from Cytisophyllum sessilifolium (Sessile-leaved cytisus).